Consider the following 357-residue polypeptide: Isoflavone 7-O-methyltransferase (357 aa).

S-adenosyl-L-methionine contacts are provided by residues 200–203, aspartate 224, 224–225, 244–245, and lysine 258; these read VGGG, DR, and DM. Histidine 262 serves as the catalytic Proton acceptor.

The protein belongs to the class I-like SAM-binding methyltransferase superfamily. Cation-independent O-methyltransferase family. COMT subfamily.

It carries out the reaction a 7-hydroxyisoflavone + S-adenosyl-L-methionine = a 7-methoxyisoflavone + S-adenosyl-L-homocysteine + H(+). Its function is as follows. 7-O-methyltransferase involved in the biosynthesis of isoformononetin. Can use daidzein as substrate, but not medicarpin or 2,7,4'-trihydroxyisoflavanone. This is Isoflavone 7-O-methyltransferase (D7OMT) from Glycyrrhiza echinata (Licorice).